The chain runs to 213 residues: Chloramphenicol acetyltransferase 2 (213 aa).

H189 acts as the Proton acceptor in catalysis.

Belongs to the chloramphenicol acetyltransferase family. In terms of assembly, homotrimer.

The enzyme catalyses chloramphenicol + acetyl-CoA = chloramphenicol 3-acetate + CoA. Functionally, this enzyme is an effector of chloramphenicol resistance in bacteria. This is Chloramphenicol acetyltransferase 2 (cat-IIH) from Haemophilus influenzae.